Consider the following 435-residue polypeptide: Eukaryotic peptide chain release factor subunit 1-3 (435 aa).

Ala-2 carries the post-translational modification N-acetylalanine.

It belongs to the eukaryotic release factor 1 family. As to quaternary structure, heterodimer of two subunits, one of which binds GTP.

It localises to the cytoplasm. Directs the termination of nascent peptide synthesis (translation) in response to the termination codons UAA, UAG and UGA. Modulates plant growth and development. The chain is Eukaryotic peptide chain release factor subunit 1-3 from Brassica oleracea var. botrytis (Cauliflower).